The sequence spans 3603 residues: Plipastatin synthase subunit D (3603 aa).

The condensation 1 stretch occupies residues 7–306 (IQDIYPLSYM…NTMPVRVQGA (300 aa)). Residues 7-1043 (IQDIYPLSYM…ALIIREAEQN (1037 aa)) are domain 1 (proline-activating). Positions 490-889 (TYRELNKAAN…NHPDISEAAI (400 aa)) are adenylation 1. One can recognise a Carrier 1 domain in the interval 966 to 1041 (APRNLLEAKL…GLALIIREAE (76 aa)). Position 1001 is an O-(pantetheine 4'-phosphoryl)serine (S1001). The interval 1053–1334 (KRDTYPVSSA…NTLALRTRPA (282 aa)) is condensation 2. The tract at residues 1053–2069 (KRDTYPVSSA…TVEGLATVIR (1017 aa)) is domain 2 (glutamine-activating). Positions 1521–1924 (TYKELNEQAN…SIEGVREAAV (404 aa)) are adenylation 2. Residues 1997–2072 (APRNVTEMKL…GLATVIREGT (76 aa)) form the Carrier 2 domain. S2032 is subject to O-(pantetheine 4'-phosphoryl)serine. Residues 2084–2374 (KQETYPVSSA…NTLALRTRPE (291 aa)) form a condensation 3 region. The segment at 2084–3596 (KQETYPVSSA…ELTEDALQEI (1513 aa)) is domain 3 (proline-activating). The segment at 2560 to 2956 (TYQELDEWSN…CIKGVKDAAV (397 aa)) is adenylation 3. One can recognise a Carrier 3 domain in the interval 3034 to 3108 (PPSSKMEQIL…ELAAYIRDSD (75 aa)). S3069 bears the O-(pantetheine 4'-phosphoryl)serine mark. Positions 3116–3596 (VEGDVQWSPV…ELTEDALQEI (481 aa)) are epimerization.

Belongs to the ATP-dependent AMP-binding enzyme family. Pantetheine 4'-phosphate is required as a cofactor.

This protein is a multifunctional enzyme, able to activate and polymerize the amino acids Pro, Gln and Tyr as part of the biosynthesis of the lipopeptide antibiotic plipastatin. The Tyr residue is further epimerized to the D-isomer form. The activation sites for these amino acids consist of individual domains. The chain is Plipastatin synthase subunit D (ppsD) from Bacillus subtilis (strain 168).